The sequence spans 228 residues: NAD(P)H-hydrate epimerase (228 aa).

The YjeF N-terminal domain maps to 10–214 (AIDIDQELFN…DLERKYDLKI (205 aa)). (6S)-NADPHX is bound at residue 58–62 (NNGGD). Residues asparagine 59 and aspartate 123 each contribute to the K(+) site. (6S)-NADPHX-binding positions include 127-133 (GFSFKPP) and aspartate 156. Serine 159 serves as a coordination point for K(+).

Belongs to the NnrE/AIBP family. K(+) is required as a cofactor.

The catalysed reaction is (6R)-NADHX = (6S)-NADHX. It carries out the reaction (6R)-NADPHX = (6S)-NADPHX. Functionally, catalyzes the epimerization of the S- and R-forms of NAD(P)HX, a damaged form of NAD(P)H that is a result of enzymatic or heat-dependent hydration. This is a prerequisite for the S-specific NAD(P)H-hydrate dehydratase to allow the repair of both epimers of NAD(P)HX. The protein is NAD(P)H-hydrate epimerase of Pediculus humanus subsp. corporis (Body louse).